The following is a 246-amino-acid chain: MMIIPALDLIDGTVVRLHQGDYGKQRDYGNDPLPRLQDYAAQGAEVLHLVDLTGAKDPAKRQIPLIKTLVAGVNVPVQVGGGVRSEEDVAALLEAGVARVVVGSTAVKSPERVKGWFERFGADALVLALDVRIDEQGNKQVAVSGWQENSGVSLEQLVETYLPVGLKHVLCTDISRDGTLAGSNVSLYEEVCARYPQVAFQSSGGIGDINDVAALRGTGVRGVIVGRALLEGKFTVKEAIACWQNA.

Catalysis depends on Asp-8, which acts as the Proton acceptor. Catalysis depends on Asp-130, which acts as the Proton donor.

Belongs to the HisA/HisF family.

Its subcellular location is the cytoplasm. The enzyme catalyses 1-(5-phospho-beta-D-ribosyl)-5-[(5-phospho-beta-D-ribosylamino)methylideneamino]imidazole-4-carboxamide = 5-[(5-phospho-1-deoxy-D-ribulos-1-ylimino)methylamino]-1-(5-phospho-beta-D-ribosyl)imidazole-4-carboxamide. It participates in amino-acid biosynthesis; L-histidine biosynthesis; L-histidine from 5-phospho-alpha-D-ribose 1-diphosphate: step 4/9. In Shigella sonnei (strain Ss046), this protein is 1-(5-phosphoribosyl)-5-[(5-phosphoribosylamino)methylideneamino] imidazole-4-carboxamide isomerase.